The chain runs to 393 residues: CCCH-type zinc finger protein oma-2 (393 aa).

The disordered stretch occupies residues 1 to 26 (MDMLKENVIQNNEARTESSVEPSHPD). A compositionally biased stretch (basic and acidic residues) spans 14 to 26 (ARTESSVEPSHPD). 2 consecutive C3H1-type zinc fingers follow at residues 105–133 (SYKT…HGEE) and 147–175 (KYRT…HPDN). 2 disordered regions span residues 227–251 (TPDE…RYEL) and 311–340 (KQST…LTAA). A compositionally biased stretch (low complexity) spans 313–340 (STPGGVSGYSSSGSTPSQDSDSSPLTAA). Residue threonine 327 is modified to Phosphothreonine; by GSK3.

Exclusively expressed in the hermaphrodite gonad. Expression only in cellulized oocytes. Widely distributed throughout gonadal oocytes from the mitotic stage to the developing diakinesis stage.

Its subcellular location is the cytoplasm. It is found in the cytoplasmic granule. The protein localises to the cytoskeleton. The protein resides in the microtubule organizing center. It localises to the centrosome. Functionally, zinc-finger RNA-binding protein that binds to 5'-UA[AU]-3' motifs in the 3'-UTR of maternal mRNAs to suppress translation in oocytes and embryos. Acts redundantly with oma-1 to control the temporal expression and distribution of maternal proteins and thereby promote meiotic progression, oocyte maturation, fertilization and embryonic development. Also, together with oma-1, is involved in P-granule distribution during embryonic development. The protein is CCCH-type zinc finger protein oma-2 of Caenorhabditis elegans.